Reading from the N-terminus, the 300-residue chain is B1 kinase (300 aa).

A Protein kinase domain is found at 16–282 (WVVGPLIGKG…ITMVNSLTYF (267 aa)). Residues 22–30 (IGKGGFGSI) and lysine 45 each bind ATP. Aspartate 147 serves as the catalytic Proton acceptor.

The protein belongs to the protein kinase superfamily. Ser/Thr protein kinase family. Poxviruses subfamily. In terms of assembly, interacts with host JIP1; this interaction increases the amount of MAPK bound to JIP1 and subsequently increases the activity of transcription factors, such as JUN, that respond to these complexes. Interacts with protein OPG198; this interaction inhibits the repressive activity of OPG198 pseudokinase on viral replication factory formation. The cofactor is Mg(2+). Post-translationally, autophosphorylated.

Its subcellular location is the virion. The protein localises to the host cytoplasm. It catalyses the reaction L-seryl-[protein] + ATP = O-phospho-L-seryl-[protein] + ADP + H(+). The catalysed reaction is L-threonyl-[protein] + ATP = O-phospho-L-threonyl-[protein] + ADP + H(+). Its function is as follows. Essential serine/threonine-protein kinase that plays different role in the viral life cycle. Phosphorylates the host small ribosomal protein RACK1 thereby customizing the ribosomes to a state optimal for viral mRNAs (which contain poly-A leaders) but not for host mRNAs. Facilitates viral DNA replication by inhibiting host BANF1, a cellular host defense responsive to foreign DNA. Phosphorylates host BANF1 on serine and threonine residues; this leads to BANF1 relocalization to the cytoplasm, loss of dimerization and impaired DNA binding activity. Indeed, BANF1 activity depends on its DNA-binding property which is blocked by VPK1-mediated phosphorylation. Required for viral intermediate genes expression, probably by inhibiting host BANF1. Modulates cellular responses via host JUN by two different mechanisms, either by direct phosphorylation or by modulation of upstream JIP1-MAPK complexes. Seems to participate in the accumulation/processing of late proteins and thus in virion maturation. In addition, inhibits B12 repressive activity on viral DNA replication via a phosphorylation-dependent mechanism. In Vaccinia virus (strain Ankara) (VACV), this protein is B1 kinase (OPG187).